The chain runs to 276 residues: Undecaprenyl-diphosphatase 1 (276 aa).

6 consecutive transmembrane segments (helical) span residues 43 to 63 (RAMA…VWEF), 85 to 105 (ANLL…ADLI), 109 to 129 (LFNP…MLWA), 184 to 204 (ATEF…VYSG), 214 to 234 (ADFP…MIAV), and 254 to 274 (IVFG…WTAA).

It belongs to the UppP family.

It is found in the cell inner membrane. It catalyses the reaction di-trans,octa-cis-undecaprenyl diphosphate + H2O = di-trans,octa-cis-undecaprenyl phosphate + phosphate + H(+). Functionally, catalyzes the dephosphorylation of undecaprenyl diphosphate (UPP). Confers resistance to bacitracin. The chain is Undecaprenyl-diphosphatase 1 from Pseudomonas fluorescens (strain Pf0-1).